The primary structure comprises 297 residues: MSNWLVDKLIPSIMRSETQKSSVPEGLWHKCPSCEAVLYRPELEKTLDVCPKCHHHMRIDARTRLDIFLDADGREEIAAELEPVDRLKFRDSKKYKDRLSAAQKQTGEKDALIAMSGKVLNVPVVACAFEFSFMGGSMGAIVGERFVRAANVALEKRCPLVCFSASGGARMQEALISLMQMAKTSAVLARMREEGLPFISVLTDPVYGGVSASLAMLGDVIVAEPKALIGFAGPRVIEQTVREKLPEGFQRSEFLLEHGAIDLIIPRAELRSRLARLLAQMQKLPTPVETSQVTAKA.

Residues 27–296 enclose the CoA carboxyltransferase N-terminal domain; that stretch reads LWHKCPSCEA…PVETSQVTAK (270 aa). Cysteine 31, cysteine 34, cysteine 50, and cysteine 53 together coordinate Zn(2+). The segment at 31-53 adopts a C4-type zinc-finger fold; that stretch reads CPSCEAVLYRPELEKTLDVCPKC.

It belongs to the AccD/PCCB family. In terms of assembly, acetyl-CoA carboxylase is a heterohexamer composed of biotin carboxyl carrier protein (AccB), biotin carboxylase (AccC) and two subunits each of ACCase subunit alpha (AccA) and ACCase subunit beta (AccD). Zn(2+) is required as a cofactor.

The protein localises to the cytoplasm. It catalyses the reaction N(6)-carboxybiotinyl-L-lysyl-[protein] + acetyl-CoA = N(6)-biotinyl-L-lysyl-[protein] + malonyl-CoA. The protein operates within lipid metabolism; malonyl-CoA biosynthesis; malonyl-CoA from acetyl-CoA: step 1/1. Component of the acetyl coenzyme A carboxylase (ACC) complex. Biotin carboxylase (BC) catalyzes the carboxylation of biotin on its carrier protein (BCCP) and then the CO(2) group is transferred by the transcarboxylase to acetyl-CoA to form malonyl-CoA. This Stutzerimonas stutzeri (strain A1501) (Pseudomonas stutzeri) protein is Acetyl-coenzyme A carboxylase carboxyl transferase subunit beta.